Reading from the N-terminus, the 295-residue chain is Hydroxyquinol 1,2-dioxygenase (295 aa).

Fe cation is bound by residues Y165, Y200, H224, and H226.

It belongs to the intradiol ring-cleavage dioxygenase family. The cofactor is Fe(3+).

The enzyme catalyses benzene-1,2,4-triol + O2 = maleylacetate + 2 H(+). Its pathway is aromatic compound metabolism. Functionally, involved in the gamma-resorcylate (2,6-dihydroxybenzoate) catabolism. Catalyzes the conversion of hydroxyquinol to malelylacetate. The chain is Hydroxyquinol 1,2-dioxygenase from Rhizobium sp. (strain MTP-10005).